A 974-amino-acid chain; its full sequence is Coiled-coil domain-containing protein 146 (974 aa).

The tract at residues 1-44 is disordered; the sequence is MEDRSKYIAEESEDEEDEEQEEKEKKGGASTSTETEEDQEDIPS. Positions 10 to 21 are enriched in acidic residues; sequence EESEDEEDEEQE. Ser-12 carries the post-translational modification Phosphoserine. Coiled coils occupy residues 105 to 160, 195 to 340, 421 to 474, 512 to 660, 687 to 712, and 767 to 848; these read VQLL…QERE, KLLK…TKEN, LPEQ…REVL, KKLE…NESG, QDIEIHILEEKIRFLKLKVAEKQRQI, and LTEE…ELSM.

In terms of assembly, interacts with CCDC38 and CCDC42. Interacts with intraflagellar transport proteins IFT20 and IFT88.

The protein localises to the cytoplasm. The protein resides in the cytoskeleton. It localises to the microtubule organizing center. It is found in the centrosome. Its subcellular location is the centriole. The protein localises to the cell projection. The protein resides in the cilium. It localises to the flagellum. It is found in the flagellum axoneme. Its subcellular location is the cilium basal body. The protein localises to the midbody. In terms of biological role, essential for sperm flagellum biogenesis and male fertility. The polypeptide is Coiled-coil domain-containing protein 146 (Ccdc146) (Rattus norvegicus (Rat)).